Consider the following 71-residue polypeptide: Biotinylated protein TB7.3 homolog (71 aa).

A Biotinyl-binding domain is found at 2–71 (AEDVRAEIVA…QAGHLIAVID (70 aa)). Lysine 37 carries the post-translational modification N6-biotinyllysine.

The polypeptide is Biotinylated protein TB7.3 homolog (Mycolicibacterium smegmatis (strain ATCC 700084 / mc(2)155) (Mycobacterium smegmatis)).